A 265-amino-acid chain; its full sequence is Mlc titration factor A (265 aa).

Zn(2+) is bound by residues His-111, His-148, His-152, and Glu-211.

This sequence belongs to the MtfA family. In terms of assembly, interacts with Mlc. It depends on Zn(2+) as a cofactor.

It is found in the cytoplasm. Functionally, involved in the modulation of the activity of the glucose-phosphotransferase system (glucose-PTS). Interacts with the transcriptional repressor Mlc, preventing its interaction with DNA and leading to the modulation of expression of genes regulated by Mlc, including ptsG, which encodes the PTS system glucose-specific EIICB component. Its function is as follows. Shows zinc-dependent metallopeptidase activity. In Escherichia coli (strain 55989 / EAEC), this protein is Mlc titration factor A.